The following is a 407-amino-acid chain: Phosphopentomutase (407 aa).

Mn(2+) is bound by residues Asp10, Asp306, His311, Asp347, His348, and His359.

Belongs to the phosphopentomutase family. The cofactor is Mn(2+).

Its subcellular location is the cytoplasm. The enzyme catalyses 2-deoxy-alpha-D-ribose 1-phosphate = 2-deoxy-D-ribose 5-phosphate. It catalyses the reaction alpha-D-ribose 1-phosphate = D-ribose 5-phosphate. It participates in carbohydrate degradation; 2-deoxy-D-ribose 1-phosphate degradation; D-glyceraldehyde 3-phosphate and acetaldehyde from 2-deoxy-alpha-D-ribose 1-phosphate: step 1/2. Isomerase that catalyzes the conversion of deoxy-ribose 1-phosphate (dRib-1-P) and ribose 1-phosphate (Rib-1-P) to deoxy-ribose 5-phosphate (dRib-5-P) and ribose 5-phosphate (Rib-5-P), respectively. This Salmonella schwarzengrund (strain CVM19633) protein is Phosphopentomutase.